The chain runs to 696 residues: Translation initiation factor IF-2 (696 aa).

The tr-type G domain maps to 187-361; that stretch reads ERPPVVTVMG…EMQEIKGIPD (175 aa). A G1 region spans residues 196-203; it reads GHVDHGKT. Residue 196–203 participates in GTP binding; it reads GHVDHGKT. The G2 stretch occupies residues 221-225; that stretch reads GITQS. Residues 242–245 are G3; the sequence is DTPG. Residues 242–246 and 296–299 each bind GTP; these read DTPGH and NKID. Positions 296 to 299 are G4; it reads NKID. The tract at residues 333-335 is G5; sequence SAK.

It belongs to the TRAFAC class translation factor GTPase superfamily. Classic translation factor GTPase family. IF-2 subfamily.

It is found in the cytoplasm. In terms of biological role, one of the essential components for the initiation of protein synthesis. Protects formylmethionyl-tRNA from spontaneous hydrolysis and promotes its binding to the 30S ribosomal subunits. Also involved in the hydrolysis of GTP during the formation of the 70S ribosomal complex. This chain is Translation initiation factor IF-2, found in Thermosipho africanus (strain TCF52B).